Here is a 553-residue protein sequence, read N- to C-terminus: Membrane protein insertase YidC (553 aa).

Residues 3–23 traverse the membrane as a helical segment; it reads IKRTILWVIFSLSVVLLFDNW. The disordered stretch occupies residues 44-64; it reads AAAPGGTPAGDVPKAAAPAAA. The next 4 helical transmembrane spans lie at 359 to 379, 429 to 449, 467 to 487, and 507 to 527; these read LLGN…LVFF, LGGC…YWVL, LASP…MFVQ, and PIAF…YWVV.

Belongs to the OXA1/ALB3/YidC family. Type 1 subfamily. Interacts with the Sec translocase complex via SecD. Specifically interacts with transmembrane segments of nascent integral membrane proteins during membrane integration.

Its subcellular location is the cell inner membrane. Functionally, required for the insertion and/or proper folding and/or complex formation of integral membrane proteins into the membrane. Involved in integration of membrane proteins that insert both dependently and independently of the Sec translocase complex, as well as at least some lipoproteins. Aids folding of multispanning membrane proteins. In Ralstonia nicotianae (strain ATCC BAA-1114 / GMI1000) (Ralstonia solanacearum), this protein is Membrane protein insertase YidC.